Here is a 325-residue protein sequence, read N- to C-terminus: GMP reductase (325 aa).

Catalysis depends on Cys-174, which acts as the Thioimidate intermediate. 203–226 (IVADGGIRNNGDIAKSIRFGASMC) is a binding site for NADP(+).

The protein belongs to the IMPDH/GMPR family. GuaC type 2 subfamily.

The catalysed reaction is IMP + NH4(+) + NADP(+) = GMP + NADPH + 2 H(+). Functionally, catalyzes the irreversible NADPH-dependent deamination of GMP to IMP. It functions in the conversion of nucleobase, nucleoside and nucleotide derivatives of G to A nucleotides, and in maintaining the intracellular balance of A and G nucleotides. This chain is GMP reductase, found in Ligilactobacillus salivarius (strain UCC118) (Lactobacillus salivarius).